A 267-amino-acid chain; its full sequence is Glutamate racemase (267 aa).

Substrate-binding positions include 10 to 11 (DS) and 42 to 43 (YG). Cysteine 73 acts as the Proton donor/acceptor in catalysis. 74-75 (NT) is a substrate binding site. The active-site Proton donor/acceptor is cysteine 183. 184–185 (TH) is a substrate binding site.

This sequence belongs to the aspartate/glutamate racemases family.

It carries out the reaction L-glutamate = D-glutamate. The protein operates within cell wall biogenesis; peptidoglycan biosynthesis. In terms of biological role, provides the (R)-glutamate required for cell wall biosynthesis. In Lactobacillus acidophilus (strain ATCC 700396 / NCK56 / N2 / NCFM), this protein is Glutamate racemase.